Consider the following 736-residue polypeptide: 1,4-alpha-glucan branching enzyme GlgB (736 aa).

The active-site Nucleophile is Asp415. Catalysis depends on Glu470, which acts as the Proton donor.

This sequence belongs to the glycosyl hydrolase 13 family. GlgB subfamily. In terms of assembly, monomer.

It carries out the reaction Transfers a segment of a (1-&gt;4)-alpha-D-glucan chain to a primary hydroxy group in a similar glucan chain.. The protein operates within glycan biosynthesis; glycogen biosynthesis. Functionally, catalyzes the formation of the alpha-1,6-glucosidic linkages in glycogen by scission of a 1,4-alpha-linked oligosaccharide from growing alpha-1,4-glucan chains and the subsequent attachment of the oligosaccharide to the alpha-1,6 position. The sequence is that of 1,4-alpha-glucan branching enzyme GlgB from Paraburkholderia xenovorans (strain LB400).